Here is a 329-residue protein sequence, read N- to C-terminus: Ketol-acid reductoisomerase (NADP(+)) (329 aa).

The region spanning 1-181 (MKVYYENDAD…GATRSGVLQT (181 aa)) is the KARI N-terminal Rossmann domain. NADP(+)-binding positions include 24-27 (YGSQ), R47, and 82-85 (DQVQ). The active site involves H107. Residue G133 coordinates NADP(+). Positions 182–327 (TFREETETDL…GELRKMMSWL (146 aa)) constitute a KARI C-terminal knotted domain. Mg(2+) contacts are provided by D190, E194, E226, and E230. S251 is a binding site for substrate.

Belongs to the ketol-acid reductoisomerase family. Requires Mg(2+) as cofactor.

The catalysed reaction is (2R)-2,3-dihydroxy-3-methylbutanoate + NADP(+) = (2S)-2-acetolactate + NADPH + H(+). It catalyses the reaction (2R,3R)-2,3-dihydroxy-3-methylpentanoate + NADP(+) = (S)-2-ethyl-2-hydroxy-3-oxobutanoate + NADPH + H(+). The protein operates within amino-acid biosynthesis; L-isoleucine biosynthesis; L-isoleucine from 2-oxobutanoate: step 2/4. Its pathway is amino-acid biosynthesis; L-valine biosynthesis; L-valine from pyruvate: step 2/4. Involved in the biosynthesis of branched-chain amino acids (BCAA). Catalyzes an alkyl-migration followed by a ketol-acid reduction of (S)-2-acetolactate (S2AL) to yield (R)-2,3-dihydroxy-isovalerate. In the isomerase reaction, S2AL is rearranged via a Mg-dependent methyl migration to produce 3-hydroxy-3-methyl-2-ketobutyrate (HMKB). In the reductase reaction, this 2-ketoacid undergoes a metal-dependent reduction by NADPH to yield (R)-2,3-dihydroxy-isovalerate. The chain is Ketol-acid reductoisomerase (NADP(+)) from Maridesulfovibrio salexigens (strain ATCC 14822 / DSM 2638 / NCIMB 8403 / VKM B-1763) (Desulfovibrio salexigens).